Reading from the N-terminus, the 331-residue chain is DNA-directed RNA polymerase subunit alpha (331 aa).

Residues 1-237 (MQSFEKEFLK…DQLSSFIDLK (237 aa)) are alpha N-terminal domain (alpha-NTD). The interval 251 to 331 (FDPSLLNLVD…NWPPKHLSEQ (81 aa)) is alpha C-terminal domain (alpha-CTD).

This sequence belongs to the RNA polymerase alpha chain family. Homodimer. The RNAP catalytic core consists of 2 alpha, 1 beta, 1 beta' and 1 omega subunit. When a sigma factor is associated with the core the holoenzyme is formed, which can initiate transcription.

The enzyme catalyses RNA(n) + a ribonucleoside 5'-triphosphate = RNA(n+1) + diphosphate. In terms of biological role, DNA-dependent RNA polymerase catalyzes the transcription of DNA into RNA using the four ribonucleoside triphosphates as substrates. The sequence is that of DNA-directed RNA polymerase subunit alpha from Blochmanniella floridana.